The sequence spans 235 residues: MKKLSKRMKALSTKIEDRTYAPLEALGIVKENANAKFDETIEAHIRLGIDPKYTDQQLRTTVALPNGTGQSIKIAVITSGENVAKAKSAGADLFGEEDLVESINKGNMDFDLLIATPDMMPKVAKLGRVLGPRGLMPNPKAGTVTGDIASAIKEFKAGKLEFRADKAGIVHVRFGKASFTENALFENLKTLQESIDKNKPSGAKGKYWRSFYLTSTMGPSVQVDINALQDYQPES.

It belongs to the universal ribosomal protein uL1 family. Part of the 50S ribosomal subunit.

Its function is as follows. Binds directly to 23S rRNA. The L1 stalk is quite mobile in the ribosome, and is involved in E site tRNA release. Protein L1 is also a translational repressor protein, it controls the translation of the L11 operon by binding to its mRNA. The polypeptide is Large ribosomal subunit protein uL1 (Prochlorococcus marinus subsp. pastoris (strain CCMP1986 / NIES-2087 / MED4)).